The sequence spans 180 residues: Shikimate kinase (180 aa).

14–19 (GAGKSC) lines the ATP pocket. S18 is a binding site for Mg(2+). Residues D36, R60, and G82 each contribute to the substrate site. R120 contributes to the ATP binding site. R139 is a substrate binding site.

Belongs to the shikimate kinase family. As to quaternary structure, monomer. Requires Mg(2+) as cofactor.

The protein localises to the cytoplasm. It catalyses the reaction shikimate + ATP = 3-phosphoshikimate + ADP + H(+). Its pathway is metabolic intermediate biosynthesis; chorismate biosynthesis; chorismate from D-erythrose 4-phosphate and phosphoenolpyruvate: step 5/7. In terms of biological role, catalyzes the specific phosphorylation of the 3-hydroxyl group of shikimic acid using ATP as a cosubstrate. The sequence is that of Shikimate kinase from Xanthomonas euvesicatoria pv. vesicatoria (strain 85-10) (Xanthomonas campestris pv. vesicatoria).